The sequence spans 241 residues: 7-cyano-7-deazaguanine synthase (241 aa).

An ATP-binding site is contributed by 15–25; that stretch reads FSGGQDSTTTL. Residues Cys203, Cys218, Cys221, and Cys224 each contribute to the Zn(2+) site.

It belongs to the QueC family. The cofactor is Zn(2+).

The enzyme catalyses 7-carboxy-7-deazaguanine + NH4(+) + ATP = 7-cyano-7-deazaguanine + ADP + phosphate + H2O + H(+). It functions in the pathway purine metabolism; 7-cyano-7-deazaguanine biosynthesis. In terms of biological role, catalyzes the ATP-dependent conversion of 7-carboxy-7-deazaguanine (CDG) to 7-cyano-7-deazaguanine (preQ(0)). The polypeptide is 7-cyano-7-deazaguanine synthase (Azorhizobium caulinodans (strain ATCC 43989 / DSM 5975 / JCM 20966 / LMG 6465 / NBRC 14845 / NCIMB 13405 / ORS 571)).